The primary structure comprises 247 residues: Terpene cyclase ausL (247 aa).

The next 6 helical transmembrane spans lie at 49 to 69, 75 to 95, 114 to 134, 138 to 158, 171 to 191, and 206 to 226; these read AIAVLPLCCDIAWEFTYAWIY, HWQGVVRVWFFLHTAVLAATL, LVLLYVAVIGAFAAGQLCLAL, GALGFHWGGALCQFLSSSGAV, SLVIWGARAISTAGGFVKLCI, and PMCWFYIGIVLSLDASYPVLY.

The protein belongs to the paxB family.

It is found in the membrane. The protein operates within secondary metabolite biosynthesis; terpenoid biosynthesis. Terpene cyclase; part of the gene cluster that mediates the biosynthesis of calidodehydroaustin, a fungal meroterpenoid. The first step of the pathway is the synthesis of 3,5-dimethylorsellinic acid by the polyketide synthase ausA. 3,5-dimethylorsellinic acid is then prenylated by the polyprenyl transferase ausN. Further epoxidation by the FAD-dependent monooxygenase ausM and cyclization by the probable terpene cyclase ausL lead to the formation of protoaustinoid A. Protoaustinoid A is then oxidized to spiro-lactone preaustinoid A3 by the combined action of the FAD-binding monooxygenases ausB and ausC, and the dioxygenase ausE. Acid-catalyzed keto-rearrangement and ring contraction of the tetraketide portion of preaustinoid A3 by ausJ lead to the formation of preaustinoid A4. The aldo-keto reductase ausK, with the help of ausH, is involved in the next step by transforming preaustinoid A4 into isoaustinone which is in turn hydroxylated by the P450 monooxygenase ausI to form austinolide. The cytochrome P450 monooxygenase ausG modifies austinolide to austinol. Austinol is further acetylated to austin by the O-acetyltransferase ausP, which spontaneously changes to dehydroaustin. The cytochrome P450 monooxygenase ausR then converts dehydroaustin is into 7-dehydrodehydroaustin. The hydroxylation catalyzed by ausR permits the O-acetyltransferase ausQ to add an additional acetyl group to the molecule, leading to the formation of acetoxydehydroaustin. The short chain dehydrogenase ausT catalyzes the reduction of the double bond present between carbon atoms 1 and 2 to convert 7-dehydrodehydroaustin into 1,2-dihydro-7-hydroxydehydroaustin. AusQ catalyzes not only an acetylation reaction but also the addition of the PKS ausV diketide product to 1,2-dihydro-7-hydroxydehydroaustin, forming precalidodehydroaustin. Finally, the iron/alpha-ketoglutarate-dependent dioxygenase converts precalidodehydroaustin into calidodehydroaustin. This is Terpene cyclase ausL from Aspergillus calidoustus.